Consider the following 419-residue polypeptide: UDP-N-acetylglucosamine 1-carboxyvinyltransferase (419 aa).

22–23 (KN) is a binding site for phosphoenolpyruvate. Arg-95 lines the UDP-N-acetyl-alpha-D-glucosamine pocket. Cys-119 serves as the catalytic Proton donor. Residue Cys-119 is modified to 2-(S-cysteinyl)pyruvic acid O-phosphothioketal. Residues 164–167 (KVSV), Asp-308, and Ile-330 contribute to the UDP-N-acetyl-alpha-D-glucosamine site.

The protein belongs to the EPSP synthase family. MurA subfamily.

It is found in the cytoplasm. The enzyme catalyses phosphoenolpyruvate + UDP-N-acetyl-alpha-D-glucosamine = UDP-N-acetyl-3-O-(1-carboxyvinyl)-alpha-D-glucosamine + phosphate. It functions in the pathway cell wall biogenesis; peptidoglycan biosynthesis. Functionally, cell wall formation. Adds enolpyruvyl to UDP-N-acetylglucosamine. The polypeptide is UDP-N-acetylglucosamine 1-carboxyvinyltransferase (Rickettsia peacockii (strain Rustic)).